A 624-amino-acid chain; its full sequence is MDYLSSMGSQTARFCLILLFLFYYLPCALSQDDLWGCGTPFRCGNITAGFPFLGGIRGEVCGHHSLKLNCNKHSNTTSLIFSGHNYTVLYIDNNNNSVTLGLSRQDFSGPFCSASFSSTLLSSGLFQNLPSYKSLTVFYACDPRRHFLGNFTCPVKGLGSIIQNSTYGILCDGSFSVPVPTSFVSEEEVLDLTHLESVLRKGFEVKLNIDEIPCPLECFSSRANCLFLAGSCCKYHDRTTTCGGDTGDLLREIIPNTRSILITIGQVVGFHVFIIVVMIIAFLFWRRKKVNDLRKQNLEALVTSRRYSYRQIKKITKSFTEVVGRGGFGTVYKGNLRDGRKVAVKILKDSNGNCEDFINEVASISQTSHVNIVSLLGFCFEKSKRAIVYEFLENGSLDQSSNLDVSTLYGIALGVARGIEYLHFGCKKRIVHFDIKPQNVLLDENLKPKVADFGLAKLCEKQESILSLLDTRGTIGYIAPELFSRVYGNVSHKSDVYSYGMLVLEMTGARNKERVQNADSNNSSAYFPDWIFKDLENGDYVKLLADGLTREEEDIAKKMILVGLWCIQFRPSDRPSMNKVVGMMEGNLDSLDPPPKPLLHMPMQNNNAESSQPSEEDSSIYSEV.

The first 30 residues, 1 to 30, serve as a signal peptide directing secretion; it reads MDYLSSMGSQTARFCLILLFLFYYLPCALS. The Extracellular segment spans residues 31–263; the sequence is QDDLWGCGTP…IPNTRSILIT (233 aa). Asparagine 45, asparagine 75, asparagine 85, asparagine 95, asparagine 150, and asparagine 164 each carry an N-linked (GlcNAc...) asparagine glycan. The chain crosses the membrane as a helical span at residues 264–284; that stretch reads IGQVVGFHVFIIVVMIIAFLF. Residues 285–624 lie on the Cytoplasmic side of the membrane; it reads WRRKKVNDLR…EEDSSIYSEV (340 aa). A Protein kinase domain is found at 317-599; the sequence is KSFTEVVGRG…SLDPPPKPLL (283 aa). Residues 323–331 and lysine 345 each bind ATP; that span reads VGRGGFGTV. The Proton acceptor role is filled by aspartate 434. The disordered stretch occupies residues 587–624; sequence NLDSLDPPPKPLLHMPMQNNNAESSQPSEEDSSIYSEV. Residues 603–624 show a composition bias toward polar residues; that stretch reads MQNNNAESSQPSEEDSSIYSEV.

Belongs to the protein kinase superfamily. Ser/Thr protein kinase family.

Its subcellular location is the membrane. The catalysed reaction is L-seryl-[protein] + ATP = O-phospho-L-seryl-[protein] + ADP + H(+). It carries out the reaction L-threonyl-[protein] + ATP = O-phospho-L-threonyl-[protein] + ADP + H(+). This is LEAF RUST 10 DISEASE-RESISTANCE LOCUS RECEPTOR-LIKE PROTEIN KINASE-like 2.2 from Arabidopsis thaliana (Mouse-ear cress).